Here is a 348-residue protein sequence, read N- to C-terminus: 11-beta-hydroxysteroid dehydrogenase A (348 aa).

Residues 10 to 30 (LIAPPFTFFFLLFFLPPFQIF) traverse the membrane as a helical; Signal-anchor for type II membrane protein segment. The short motif at 13–26 (PPFTFFFLLFFLPP) is the Proline-knob element. Residues 54-80 (GASS…AARR), D105, and 132-135 (NAGI) each bind NADP(+). S184 serves as a coordination point for substrate. Catalysis depends on Y197, which acts as the Proton acceptor. Residues 197 to 201 (YNASK) and K201 contribute to the NADP(+) site.

It belongs to the short-chain dehydrogenases/reductases (SDR) family. As to expression, expressed in seeds (at protein level). Not expressed in stem, leaf or root (at protein level).

The protein resides in the lipid droplet. It localises to the membrane. It catalyses the reaction an 11beta-hydroxysteroid + NADP(+) = an 11-oxosteroid + NADPH + H(+). The catalysed reaction is an 11beta-hydroxysteroid + NAD(+) = an 11-oxosteroid + NADH + H(+). The enzyme catalyses corticosterone + NADP(+) = 11-dehydrocorticosterone + NADPH + H(+). It carries out the reaction corticosterone + NAD(+) = 11-dehydrocorticosterone + NADH + H(+). It catalyses the reaction 17beta-estradiol + NADP(+) = estrone + NADPH + H(+). The catalysed reaction is 17beta-estradiol + NAD(+) = estrone + NADH + H(+). In terms of biological role, has dehydrogenase activity against corticosterone (11 beta-hydroxysteroid) and estradiol (17 beta-hydroxysteroid), with higher activity against estradiol. Possesses higher dehydrogenase activity with NADP(+) than NAD(+) regardless of the sterol substrate. May be involved in signal transduction regulated by various sterols. The protein is 11-beta-hydroxysteroid dehydrogenase A of Sesamum indicum (Oriental sesame).